The following is a 103-amino-acid chain: Ig kappa-b5 chain C region (103 aa).

In terms of domain architecture, Ig-like spans 5-99 (PTVLIFPPAP…GAGSVVQSFS (95 aa)). C26 and C85 are oxidised to a cystine.

This Oryctolagus cuniculus (Rabbit) protein is Ig kappa-b5 chain C region.